The following is a 299-amino-acid chain: ATP phosphoribosyltransferase (299 aa).

It belongs to the ATP phosphoribosyltransferase family. Long subfamily. Equilibrium between an active dimeric form, an inactive hexameric form and higher aggregates. Interconversion between the various forms is largely reversible and is influenced by the natural substrates and inhibitors of the enzyme. Mg(2+) serves as cofactor.

The protein resides in the cytoplasm. The enzyme catalyses 1-(5-phospho-beta-D-ribosyl)-ATP + diphosphate = 5-phospho-alpha-D-ribose 1-diphosphate + ATP. It participates in amino-acid biosynthesis; L-histidine biosynthesis; L-histidine from 5-phospho-alpha-D-ribose 1-diphosphate: step 1/9. With respect to regulation, feedback inhibited by histidine. Catalyzes the condensation of ATP and 5-phosphoribose 1-diphosphate to form N'-(5'-phosphoribosyl)-ATP (PR-ATP). Has a crucial role in the pathway because the rate of histidine biosynthesis seems to be controlled primarily by regulation of HisG enzymatic activity. The protein is ATP phosphoribosyltransferase of Escherichia coli O7:K1 (strain IAI39 / ExPEC).